A 338-amino-acid chain; its full sequence is tRNA N6-adenosine threonylcarbamoyltransferase (338 aa).

Positions 114 and 118 each coordinate Fe cation. Residues L136–G140, D169, G182, D186, and N275 each bind substrate. D301 is a binding site for Fe cation.

This sequence belongs to the KAE1 / TsaD family. Fe(2+) serves as cofactor.

It localises to the cytoplasm. The enzyme catalyses L-threonylcarbamoyladenylate + adenosine(37) in tRNA = N(6)-L-threonylcarbamoyladenosine(37) in tRNA + AMP + H(+). Required for the formation of a threonylcarbamoyl group on adenosine at position 37 (t(6)A37) in tRNAs that read codons beginning with adenine. Is involved in the transfer of the threonylcarbamoyl moiety of threonylcarbamoyl-AMP (TC-AMP) to the N6 group of A37, together with TsaE and TsaB. TsaD likely plays a direct catalytic role in this reaction. This Streptococcus equi subsp. equi (strain 4047) protein is tRNA N6-adenosine threonylcarbamoyltransferase.